The following is an 82-amino-acid chain: Protein WFDC11 (82 aa).

An N-terminal signal peptide occupies residues 1-21; sequence MKPSWFPCLVFLCMLLLSALG.

The protein resides in the secreted. The chain is Protein WFDC11 (Wfdc11) from Mus musculus (Mouse).